A 108-amino-acid polypeptide reads, in one-letter code: Thiosulfate sulfurtransferase GlpE (108 aa).

The region spanning 17–105 is the Rhodanese domain; sequence KDGSAALVDI…WARQYPQDVE (89 aa). Cysteine 65 (cysteine persulfide intermediate) is an active-site residue.

The protein belongs to the GlpE family.

The protein resides in the cytoplasm. It catalyses the reaction thiosulfate + hydrogen cyanide = thiocyanate + sulfite + 2 H(+). It carries out the reaction thiosulfate + [thioredoxin]-dithiol = [thioredoxin]-disulfide + hydrogen sulfide + sulfite + 2 H(+). Functionally, transferase that catalyzes the transfer of sulfur from thiosulfate to thiophilic acceptors such as cyanide or dithiols. May function in a CysM-independent thiosulfate assimilation pathway by catalyzing the conversion of thiosulfate to sulfite, which can then be used for L-cysteine biosynthesis. The protein is Thiosulfate sulfurtransferase GlpE of Serratia proteamaculans (strain 568).